The following is a 207-amino-acid chain: Outer-membrane lipoprotein LolB (207 aa).

Positions 1-21 (MPTNTVRCLRLLPLASVLLAA) are cleaved as a signal peptide. A lipid anchor (N-palmitoyl cysteine) is attached at C22. C22 carries the S-diacylglycerol cysteine lipid modification.

Belongs to the LolB family. Monomer.

Its subcellular location is the cell outer membrane. In terms of biological role, plays a critical role in the incorporation of lipoproteins in the outer membrane after they are released by the LolA protein. This Pectobacterium carotovorum subsp. carotovorum (strain PC1) protein is Outer-membrane lipoprotein LolB.